A 589-amino-acid chain; its full sequence is Intermediate filament protein B (589 aa).

Residues 1 to 84 (SLKQSQESSE…LEATDKEKKE (84 aa)) are head. An IF rod domain is found at 81–433 (EKKEMQGLND…KMLEGEESRV (353 aa)). The coil 1A stretch occupies residues 85–116 (MQGLNDRLGNYIDRVKKLEEQNRKLVADLDEL). The tract at residues 117–130 (RGRWGKDTSEIKIQ) is linker 1. Residues 131–268 (YSDSLRDARK…RVHEQEVKEL (138 aa)) form a coil 1B region. Positions 269 to 285 (QALLAQAPADTREFFKN) are linker 12. The segment at 286–433 (ELALAIRDIK…KMLEGEESRV (148 aa)) is coil 2. The interval 434 to 589 (GLRQMVEQVV…HTQKTIQTGQ (156 aa)) is tail. The tract at residues 446–470 (HSLQQQEDTDSTRNVRGEVSTKTTF) is disordered. The LTD domain maps to 466-584 (TKTTFQRSAK…DERATHTQKT (119 aa)).

Belongs to the intermediate filament family. In terms of assembly, a and B can form homopolymers. As to expression, giant body muscle cells.

Its subcellular location is the cytoplasm. The polypeptide is Intermediate filament protein B (Ascaris suum (Pig roundworm)).